The following is an 89-amino-acid chain: Small ribosomal subunit protein bS20 (89 aa).

Residues 1-26 form a disordered region; sequence MANIKASKKDALTSEKRRKKNSSRRS. The segment covering 16–26 has biased composition (basic residues); it reads KRRKKNSSRRS.

The protein belongs to the bacterial ribosomal protein bS20 family.

In terms of biological role, binds directly to 16S ribosomal RNA. The protein is Small ribosomal subunit protein bS20 of Buchnera aphidicola subsp. Acyrthosiphon pisum (strain 5A).